The chain runs to 200 residues: A-type ATP synthase subunit E 3 (200 aa).

It belongs to the V-ATPase E subunit family. Has multiple subunits with at least A(3), B(3), C, D, E, F, H, I and proteolipid K(x).

It is found in the cell membrane. Functionally, component of the A-type ATP synthase that produces ATP from ADP in the presence of a proton gradient across the membrane. The polypeptide is A-type ATP synthase subunit E 3 (Methanospirillum hungatei JF-1 (strain ATCC 27890 / DSM 864 / NBRC 100397 / JF-1)).